A 306-amino-acid chain; its full sequence is D-alanine--D-alanine ligase (306 aa).

Catalysis depends on residues Glu18 and Ser150. Positions 104-303 (KMLWKAFGLP…FEQLVVKILE (200 aa)) constitute an ATP-grasp domain. Position 134–189 (134–189 (VAKLGLPLMVKPSLEGSSVGLTKVKAVEELKSAVEYALKFDNTILIEEWLAGDELT)) interacts with ATP. Asp257, Glu270, and Asn272 together coordinate Mg(2+). Residue Ser281 is part of the active site.

The protein belongs to the D-alanine--D-alanine ligase family. The cofactor is Mg(2+). Mn(2+) is required as a cofactor.

The protein localises to the cytoplasm. The catalysed reaction is 2 D-alanine + ATP = D-alanyl-D-alanine + ADP + phosphate + H(+). The protein operates within cell wall biogenesis; peptidoglycan biosynthesis. Cell wall formation. This chain is D-alanine--D-alanine ligase, found in Haemophilus influenzae (strain ATCC 51907 / DSM 11121 / KW20 / Rd).